A 2555-amino-acid polypeptide reads, in one-letter code: Ubiquitin carboxyl-terminal hydrolase 9Y (2555 aa).

A disordered region spans residues 1 to 66; that stretch reads MTAITHGSPV…APPQHEDEEP (66 aa). The span at 13–45 shows a compositional bias: polar residues; the sequence is NDSQGQVLDGQSQHLFQQNQTSSPDSSNENSVA. S589 is modified (phosphoserine). Phosphothreonine is present on T591. Residues 972 to 997 form a disordered region; that stretch reads NMPSSPDSSSDSSTASPGNHRNHYND. Residues 974-984 show a composition bias toward low complexity; sequence PSSPDSSSDSS. The region spanning 1559–1958 is the USP domain; the sequence is VGLKNAGATC…NAYILFYEQM (400 aa). Catalysis depends on C1568, which acts as the Nucleophile. Zn(2+)-binding residues include C1729, H1731, C1773, and C1776. H1881 functions as the Proton acceptor in the catalytic mechanism. S2444 carries the post-translational modification Phosphoserine. Positions 2476-2485 are enriched in acidic residues; sequence PEEEPDDQDA. The disordered stretch occupies residues 2476 to 2555; sequence PEEEPDDQDA…EVSSPQMKDQ (80 aa). 2 stretches are compositionally biased toward polar residues: residues 2504 to 2514 and 2528 to 2555; these read PASQYQQNNHV and NNPQ…MKDQ. Residue Y2541 is modified to Phosphotyrosine. Phosphoserine is present on S2548.

Belongs to the peptidase C19 family. As to expression, widely expressed in embryonic and adult tissues.

It catalyses the reaction Thiol-dependent hydrolysis of ester, thioester, amide, peptide and isopeptide bonds formed by the C-terminal Gly of ubiquitin (a 76-residue protein attached to proteins as an intracellular targeting signal).. Its pathway is protein modification; protein ubiquitination. Deubiquitinase that mediates deubiquitination of target proteins. May stabilize target proteins that are important for male germ cell development. The polypeptide is Ubiquitin carboxyl-terminal hydrolase 9Y (Homo sapiens (Human)).